The primary structure comprises 391 residues: Zinc finger protein 414 (391 aa).

The interval 1-110 (MDEEPSGPSL…RRPPPGKQIP (110 aa)) is disordered. The segment covering 84 to 93 (GPTSTVSGTS) has biased composition (polar residues). 3 consecutive C2H2-type zinc fingers follow at residues 109–133 (IPCS…LRTH), 145–169 (FRCS…GKLH), and 176–201 (FKCE…CAEH). Disordered stretches follow at residues 201 to 243 (HAQS…LEPF), 274 to 312 (LAAA…SGHA), and 344 to 391 (HLED…FSPL). The segment covering 214-226 (LDRESPASERPPE) has biased composition (basic and acidic residues). A compositionally biased stretch (pro residues) spans 227 to 236 (SDPAPAPGLP). The segment covering 274–286 (LAAAPGPPASSAA) has biased composition (low complexity). Residues 326 to 348 (YSCMQCAFSTASRPAMTLHLEDH) form a C2H2-type 4 zinc finger. Residues 353 to 372 (PAAPAPGQPRPDAPADPAPL) are compositionally biased toward pro residues.

The protein belongs to the krueppel C2H2-type zinc-finger protein family.

The protein localises to the nucleus. Functionally, may be involved in transcriptional regulation. This is Zinc finger protein 414 (ZNF414) from Bos taurus (Bovine).